Consider the following 237-residue polypeptide: MAETTKLQLFVKASEDGESVGHCPSCQRLFMVLLLKGVPFTLTTVDTRRALDVLKDFAPGSQLPILLYDGDVKTDTLQIEEFLEETLGPPDFPSLAPRYRESNTAGNDIFHKFSAFIKNPVPTQDNALYQQLLRALTRLDSYLRAPLDHELAQEPHLRESHRRFLDGDQFTLADCSLLPKLHIVDTVCAHFRQLPIPAELSCVRRYLDSALQKKEFKYTCPHSAEILAAYQPAVHPR.

The interval 1–89 is required for insertion into the membrane; it reads MAETTKLQLF…EEFLEETLGP (89 aa). One can recognise a GST N-terminal domain in the interval 13–91; sequence ASEDGESVGH…FLEETLGPPD (79 aa). A G-site motif is present at residues 23 to 26; that stretch reads CPSC. Cysteines 23 and 26 form a disulfide. The chain crosses the membrane as a helical span at residues 25-45; sequence SCQRLFMVLLLKGVPFTLTTV. Residues 69-236 form the GST C-terminal domain; that stretch reads DGDVKTDTLQ…LAAYQPAVHP (168 aa). Serine 160 is modified (phosphoserine).

It belongs to the chloride channel CLIC family. Associated with the C-terminal of MAPK15.

It localises to the nucleus. It is found in the membrane. Its subcellular location is the cell membrane. The protein resides in the cytoplasm. The protein localises to the secreted. It localises to the extracellular space. It is found in the extracellular matrix. The enzyme catalyses chloride(in) = chloride(out). In terms of biological role, in the soluble state, catalyzes glutaredoxin-like thiol disulfide exchange reactions with reduced glutathione as electron donor. Reduced in a glutathione-dependent way and secreted into the extracellular matrix where it activates TGM2 and promotes blood vessel growth during tissue remodeling as occurs in tumorigenesis. Can reduce specific cysteines in TGM2 and regulate cofactor binding. Can insert into membranes and form outwardly rectifying chloride ion channels. May participate in cellular growth control. In Mus musculus (Mouse), this protein is Chloride intracellular channel protein 3.